Reading from the N-terminus, the 344-residue chain is Protein AIR2 (344 aa).

The segment at 1-23 (MEKNTAPFVVDTAPTTPPDKLVA) is disordered. S31 and S49 each carry phosphoserine. 3 CCHC-type zinc fingers span residues 61 to 78 (PKCN…DCPH), 99 to 116 (IQCS…QCPH), and 162 to 179 (IYCY…DCKE). Disordered stretches follow at residues 227–274 (YDED…PTIR) and 312–344 (STYV…GKRR). Residues 317-337 (NNSISNSSNYRNYNSYQPYRS) are compositionally biased toward low complexity.

It belongs to the AIR1 family. In terms of assembly, component of the TRAMP complex (also called TRF4 complex) composed of at least HUL4, MTR4, PAP2/TRF4 and either AIR1 or AIR2. Interacts with HMT1 and NPL3. The interaction with NPL3 requires the presence of HMT1. Interacts directly with PAP2.

It is found in the nucleus. Its function is as follows. Component of the TRAMP (TRF4) complex which has a poly(A) RNA polymerase activity and is involved in a post-transcriptional quality control mechanism limiting inappropriate expression of genetic information. Polyadenylation is required for the degradative activity of the exosome on several of its nuclear RNA substrates like cryptic transcripts generated by RNA polymerase II and III, or hypomethylated pre-tRNAi-Met. Both complexes polyadenylate RNA processing and degradation intermediates of snRNAs, snoRNAs and mRNAs that accumulate in strains lacking a functional exosome. AIR2 also inhibits the methylation of NPL3 mediated by HMT1 through its interaction with HMT1. The sequence is that of Protein AIR2 (AIR2) from Saccharomyces cerevisiae (strain ATCC 204508 / S288c) (Baker's yeast).